Reading from the N-terminus, the 147-residue chain is UPF0306 protein YhbP (147 aa).

Belongs to the UPF0306 family.

This is UPF0306 protein YhbP from Salmonella choleraesuis (strain SC-B67).